A 459-amino-acid chain; its full sequence is SLIT-ROBO Rho GTPase-activating protein 2C (459 aa).

Residues 22-325 (KEIRAQLTEQ…AVENLDATSD (304 aa)) form the F-BAR domain. Basic and acidic residues predominate over residues 181-202 (LKEAEKQEEKQIGKSVKQEDRQ). The tract at residues 181 to 211 (LKEAEKQEEKQIGKSVKQEDRQTPCSPDSTA) is disordered. Residues 363–401 (QSELVQRCQQLQSRLSTLKIENEEVKKTMEATLQTIQDI) adopt a coiled-coil conformation.

Homodimer. Interacts (via F-BAR domain) with SRGAP2/SRGAP2A (via F-BAR domain); formation of the heterodimer inhibits SRGAP2/SRGAP2A function. Ubiquitously expressed with higher expression in cerebellum. Probably expressed in fetal and adult neurons (at protein level).

Functionally, human-specific protein that acts as a key modifier of cortical connectivity in the human brain. Acts by inhibiting the functions of ancestral paralog SRGAP2/SRGAP2A, a postsynaptic protein that regulates excitatory and inhibitory synapse maturation and density in cortical pyramidal neurons. SRGAP2C is unstable but is able to heterodimerize with SRGAP2/SRGAP2A, thereby reducing SRGAP2/SRGAP2A levels through proteasome-dependent degradation. Inhibition of SRGAP2/SRGAP2A by SRGAP2C leads to an increase in synaptic density and protracted synaptic maturation of both excitatory and inhibitory synapses. Modifies cortical circuit connectivity by increasing the number of local and long-range cortical inputs received by layer 2/3 pyramidal neurons. Also able to increase the probability of sensory-evoked responses by layer 2/3 pyramidal neurons. The polypeptide is SLIT-ROBO Rho GTPase-activating protein 2C (Homo sapiens (Human)).